We begin with the raw amino-acid sequence, 493 residues long: Cysteine--tRNA ligase (493 aa).

Cysteine 29 contributes to the Zn(2+) binding site. Residues 31–41 (VTVYDLCHLGH) carry the 'HIGH' region motif. The tract at residues 154–179 (KLSGRDPDDQQQGASGRTADGEESRK) is disordered. Residues cysteine 213, histidine 238, and glutamate 242 each contribute to the Zn(2+) site. The 'KMSKS' region signature appears at 270 to 274 (KMSKS). Lysine 273 serves as a coordination point for ATP.

Belongs to the class-I aminoacyl-tRNA synthetase family. In terms of assembly, monomer. The cofactor is Zn(2+).

It localises to the cytoplasm. It carries out the reaction tRNA(Cys) + L-cysteine + ATP = L-cysteinyl-tRNA(Cys) + AMP + diphosphate. This Synechococcus sp. (strain CC9605) protein is Cysteine--tRNA ligase.